The chain runs to 428 residues: Enolase (428 aa).

Position 163 (Gln163) interacts with (2R)-2-phosphoglycerate. The active-site Proton donor is the Glu205. Mg(2+)-binding residues include Asp242, Glu285, and Asp312. Residues Lys337, Arg366, Ser367, and Lys388 each coordinate (2R)-2-phosphoglycerate. Residue Lys337 is the Proton acceptor of the active site.

Belongs to the enolase family. It depends on Mg(2+) as a cofactor.

The protein localises to the cytoplasm. It is found in the secreted. The protein resides in the cell surface. The enzyme catalyses (2R)-2-phosphoglycerate = phosphoenolpyruvate + H2O. It functions in the pathway carbohydrate degradation; glycolysis; pyruvate from D-glyceraldehyde 3-phosphate: step 4/5. Its function is as follows. Catalyzes the reversible conversion of 2-phosphoglycerate (2-PG) into phosphoenolpyruvate (PEP). It is essential for the degradation of carbohydrates via glycolysis. The chain is Enolase from Neisseria meningitidis serogroup A / serotype 4A (strain DSM 15465 / Z2491).